A 196-amino-acid chain; its full sequence is UMP-CMP kinase (196 aa).

Residue 13–18 (GAGKGT) participates in ATP binding. The tract at residues 33–63 (SAGDLLREERSRTDSEFGQLIDSYIKEGKIV) is NMP. Residues Arg-39, 61–63 (KIV), and 93–96 (GFPR) each bind a ribonucleoside 5'-phosphate. Asn-100 serves as a coordination point for CMP. Residues 133 to 143 (ERGKSSGRTDD) form an LID region. Arg-134 is an ATP binding site. The a ribonucleoside 5'-phosphate site is built by Arg-140 and Arg-151. An ATP-binding site is contributed by Arg-179.

It belongs to the adenylate kinase family. UMP-CMP kinase subfamily. As to quaternary structure, monomer. Mg(2+) serves as cofactor.

The protein localises to the nucleus. Its subcellular location is the cytoplasm. It carries out the reaction CMP + ATP = CDP + ADP. The catalysed reaction is dCMP + ATP = dCDP + ADP. It catalyses the reaction UMP + ATP = UDP + ADP. The enzyme catalyses a 2'-deoxyribonucleoside 5'-diphosphate + ATP = a 2'-deoxyribonucleoside 5'-triphosphate + ADP. It carries out the reaction a ribonucleoside 5'-diphosphate + ATP = a ribonucleoside 5'-triphosphate + ADP. Its function is as follows. Catalyzes the phosphorylation of pyrimidine nucleoside monophosphates at the expense of ATP. Plays an important role in de novo pyrimidine nucleotide biosynthesis. Has preference for UMP and CMP as phosphate acceptors. Also displays broad nucleoside diphosphate kinase activity. In Danio rerio (Zebrafish), this protein is UMP-CMP kinase (cmpk).